A 270-amino-acid polypeptide reads, in one-letter code: Expansin-B10 (270 aa).

The first 31 residues, 1–31 (MAVNVRTMWSSMRAQVAMVVALVFLVRGAWC), serve as a signal peptide directing secretion. A glycan (N-linked (GlcNAc...) asparagine) is linked at N41. An Expansin-like EG45 domain is found at 70–176 (GGGCGYKDVN…RRVKCKYDSK (107 aa)). Intrachain disulfides connect C73-C101, C104-C171, and C109-C115. The 82-residue stretch at 188 to 269 (NYLALLVKYV…NWKANTAYTA (82 aa)) folds into the Expansin-like CBD domain.

The protein belongs to the expansin family. Expansin B subfamily. In terms of tissue distribution, expressed in pollen.

The protein localises to the secreted. It localises to the cell wall. The protein resides in the membrane. Functionally, may aid fertilization by loosening the cell wall of the stigma and style, thereby facilitating penetration of the pollen tube. Acts selectively on grass cell walls, which are relatively poor in pectins and xyloglucans and rich in glucuronoarabinoxylans and (1-3),(1-4)-beta-D-glucans, when compared with cell walls of other angiosperms, including other monocots. The protein is Expansin-B10 (EXPB10) of Zea mays (Maize).